A 352-amino-acid chain; its full sequence is Fatty acid synthase (352 aa).

The region spanning 1-352 (MEDVVIAGIA…KVVLSLEHGL (352 aa)) is the Ketosynthase family 3 (KS3) domain. Active-site for beta-ketoacyl synthase activity residues include cysteine 161, histidine 293, and histidine 331.

Homodimer which monomers are arranged in a head to tail fashion.

The catalysed reaction is acetyl-CoA + n malonyl-CoA + 2n NADPH + 2n H(+) = a long-chain fatty acid + (n+1) CoA + n CO2 + 2n NADP(+).. Its function is as follows. Fatty acid synthetase catalyzes the formation of long-chain fatty acids from acetyl-CoA, malonyl-CoA and NADPH. This multifunctional protein has 7 catalytic activities as an acyl carrier protein. The protein is Fatty acid synthase (FASN) of Anser anser anser (Western greylag goose).